Reading from the N-terminus, the 91-residue chain is Elongation factor 1-beta (91 aa).

As to quaternary structure, homodimer.

In terms of biological role, promotes the exchange of GDP for GTP in EF-1-alpha/GDP, thus allowing the regeneration of EF-1-alpha/GTP that could then be used to form the ternary complex EF-1-alpha/GTP/AAtRNA. The protein is Elongation factor 1-beta (ef1b) of Saccharolobus solfataricus (strain ATCC 35092 / DSM 1617 / JCM 11322 / P2) (Sulfolobus solfataricus).